A 152-amino-acid polypeptide reads, in one-letter code: Deoxyuridine 5'-triphosphate nucleotidohydrolase (152 aa).

Residues 72 to 74, Asn-85, and 89 to 91 contribute to the substrate site; these read RSG and TVD.

The protein belongs to the dUTPase family. The cofactor is Mg(2+).

The enzyme catalyses dUTP + H2O = dUMP + diphosphate + H(+). Its pathway is pyrimidine metabolism; dUMP biosynthesis; dUMP from dCTP (dUTP route): step 2/2. In terms of biological role, this enzyme is involved in nucleotide metabolism: it produces dUMP, the immediate precursor of thymidine nucleotides and it decreases the intracellular concentration of dUTP so that uracil cannot be incorporated into DNA. The chain is Deoxyuridine 5'-triphosphate nucleotidohydrolase from Nitrobacter winogradskyi (strain ATCC 25391 / DSM 10237 / CIP 104748 / NCIMB 11846 / Nb-255).